A 494-amino-acid chain; its full sequence is Probable terminase, large subunit (494 aa).

An ATP-binding site is contributed by 26–33 (ADVLFGKT). Residues 56 to 63 (SGHGTGKS) carry the Walker A motif motif. Positions 158–163 (LYIIDE) match the Walker B motif motif. Residue Glu-163 is the For ATPase activity of the active site. 3 residues coordinate Mg(2+): Asp-293, Asp-356, and Asp-446.

It belongs to the punalikevirus large terminase family. As to quaternary structure, interacts with pacA protein. Mg(2+) is required as a cofactor.

Component of the molecular motor that translocates genomic DNA in empty capsid during DNA packaging. Heterooligomerize with small terminase protein to be docked on capsid portal protein. Forms a ring-like structure through which genomic DNA is translocated into the capsid. May have or induce an endonuclease activity to cleave the genome concatemer after encapsidation. The protein is Probable terminase, large subunit (pacB) of Escherichia coli (Bacteriophage P7).